A 162-amino-acid chain; its full sequence is MRLALVAVGRLKRGPERDLAEGYRARADALARGLGLSAVQLTELPESRARRAPDRCAEEGAAILACLPAGSAVIVMDEGGRAVTSAGLAEQVAAWRDGGRPGLTIVIGGADGLCESVRHRADLVFAFGAATLPHGLVRVLVLEQLYRVMTILAGHPYHRGAP.

Gly108 contributes to the S-adenosyl-L-methionine binding site.

The protein belongs to the RNA methyltransferase RlmH family. In terms of assembly, homodimer.

It localises to the cytoplasm. It carries out the reaction pseudouridine(1915) in 23S rRNA + S-adenosyl-L-methionine = N(3)-methylpseudouridine(1915) in 23S rRNA + S-adenosyl-L-homocysteine + H(+). In terms of biological role, specifically methylates the pseudouridine at position 1915 (m3Psi1915) in 23S rRNA. The polypeptide is Ribosomal RNA large subunit methyltransferase H (Methylobacterium sp. (strain 4-46)).